Here is a 715-residue protein sequence, read N- to C-terminus: 1,4-alpha-glucan branching enzyme GlgB (715 aa).

The Nucleophile role is filled by Asp399. The active-site Proton donor is the Glu452.

The protein belongs to the glycosyl hydrolase 13 family. GlgB subfamily. Monomer.

It catalyses the reaction Transfers a segment of a (1-&gt;4)-alpha-D-glucan chain to a primary hydroxy group in a similar glucan chain.. It participates in glycan biosynthesis; glycogen biosynthesis. Functionally, catalyzes the formation of the alpha-1,6-glucosidic linkages in glycogen by scission of a 1,4-alpha-linked oligosaccharide from growing alpha-1,4-glucan chains and the subsequent attachment of the oligosaccharide to the alpha-1,6 position. This Rhodopseudomonas palustris (strain BisA53) protein is 1,4-alpha-glucan branching enzyme GlgB.